The primary structure comprises 399 residues: Oligoribonuclease NrnB (399 aa).

The cofactor is Mn(2+). Co(2+) serves as cofactor. It depends on Mg(2+) as a cofactor.

Its subcellular location is the cytoplasm. Its function is as follows. Degrades RNA oligonucleotides with a length of 5 nucleotides in a 3'- to 5'-direction. Less active on shorter RNA oligonucleotides and on those with a length of 24 nucleotides. Prefers RNA oligonucleotides containing adenines rather than cytosines. This chain is Oligoribonuclease NrnB (nrnB), found in Bacillus subtilis (strain 168).